Consider the following 600-residue polypeptide: Spore coat protein SP96 (600 aa).

The DSCP-N domain maps to 21-140; the sequence is QSCSSYSGDN…DVCQCKGGQT (120 aa). The interval 139–178 is disordered; it reads QTSGGSTTGSQTSGGSTSGGSTTGSQTSGGSTTGSQTSGS. The span at 161–178 shows a compositional bias: low complexity; the sequence is TGSQTSGGSTTGSQTSGS. Follistatin-like domains lie at 184–206, 220–243, 267–289, 297–319, 331–359, and 394–416; these read SCSNTQCPNGFYCQVQGNNAVCV, PCDTVQCPYGYSCESRDGFEAKCT, LCDNVHCPRGYKCNAKNGVAKCI, VCRNIQCPTGYRCEDHNRNPICV, TCNDVNCEASGLVCVMTRARCKVGAAKCC, and PCSVAQCPTGYVCVAQNNVAVCL. The tract at residues 420–530 is disordered; that stretch reads TTTTGSTSDS…ASSSSASSSS (111 aa).

In terms of processing, glycosylated; may contain fucose and GlcNAc-alpha-1-P-Ser.

It is found in the spore wall. The chain is Spore coat protein SP96 (cotA) from Dictyostelium discoideum (Social amoeba).